We begin with the raw amino-acid sequence, 338 residues long: Aspartate-semialdehyde dehydrogenase (338 aa).

NADP(+) is bound by residues 13-16 (TGNV) and 41-42 (NS). Arginine 101 lines the phosphate pocket. Residue cysteine 132 is the Acyl-thioester intermediate of the active site. Residue glutamine 159 participates in substrate binding. Residues 162 to 163 (SG) and proline 187 each bind NADP(+). Lysine 216 is a binding site for phosphate. Arginine 237 serves as a coordination point for substrate. Histidine 244 (proton acceptor) is an active-site residue. Asparagine 317 lines the NADP(+) pocket.

This sequence belongs to the aspartate-semialdehyde dehydrogenase family. Homodimer.

It carries out the reaction L-aspartate 4-semialdehyde + phosphate + NADP(+) = 4-phospho-L-aspartate + NADPH + H(+). Its pathway is amino-acid biosynthesis; L-lysine biosynthesis via DAP pathway; (S)-tetrahydrodipicolinate from L-aspartate: step 2/4. The protein operates within amino-acid biosynthesis; L-methionine biosynthesis via de novo pathway; L-homoserine from L-aspartate: step 2/3. It functions in the pathway amino-acid biosynthesis; L-threonine biosynthesis; L-threonine from L-aspartate: step 2/5. Functionally, catalyzes the NADPH-dependent formation of L-aspartate-semialdehyde (L-ASA) by the reductive dephosphorylation of L-aspartyl-4-phosphate. The polypeptide is Aspartate-semialdehyde dehydrogenase (Rickettsia typhi (strain ATCC VR-144 / Wilmington)).